The primary structure comprises 346 residues: Protein FAF1 (346 aa).

Disordered regions lie at residues 22 to 120 (QFGS…LRSG) and 323 to 346 (KRDI…KSRR). Residues 31 to 65 (FEDKTKNIRTEVDTRDSSGDEIDNSDHGSDFKDGT) are compositionally biased toward basic and acidic residues. Residues 72-85 (SDEDSGNETAEENN) show a composition bias toward acidic residues.

In terms of assembly, interacts with KRR1.

It localises to the nucleus. The protein localises to the nucleolus. Its function is as follows. Required for pre-rRNA processing and 40S ribosomal subunit assembly. Seems to act in the processing of 35S rRNA at the A(0), A(1), and A(2) cleavage sites. This is Protein FAF1 (FAF1) from Saccharomyces cerevisiae (strain ATCC 204508 / S288c) (Baker's yeast).